Reading from the N-terminus, the 405-residue chain is MTTTSVCPFSKAARPDDGSTRKQGEITASGCPFSKAARPDDASARKQGETTASGCPFSKSARPDENGSKGCPEQEGNLNKDSTDSATVPAKCPFGYDSQTFKLGPFSCMLCQALLYESSRCVPCTHVFCKVCLTRFKDCPLCGADIESIEVDENLQKMVDQFIEGHARIKRSVVNGTEKEEVENDNKKVIYADVSMERGSFLVQQAMRAFSAQNYESAKSRLAMCTEDIRDQLGREGNTPELCSQLGAVLGMLGDCSRAMGDSSSAVKHFEESVEFLMKLPLNDLEITHTLSVSLNKIGDLKYYDEDLQAARSYYDRALNVRRDAMKHHPNAPSQILDVAVSLAKVADIDRTLQNEVAATDGFKEGMRLLESLKLDSEDSALEQRRLSVLEFLKKQVETDAETAL.

Residues 1–85 (MTTTSVCPFS…GNLNKDSTDS (85 aa)) are disordered. Basic and acidic residues-rich tracts occupy residues 13–24 (ARPDDGSTRKQG) and 37–48 (ARPDDASARKQG). A compositionally biased stretch (polar residues) spans 76–85 (GNLNKDSTDS). The RING-type zinc-finger motif lies at 108 to 142 (CMLCQALLYESSRCVPCTHVFCKVCLTRFKDCPLC). 2 TPR repeats span residues 247–280 (GAVL…LMKL) and 292–325 (SVSL…RRDA).

As to quaternary structure, interacts with the catalases CAT1, CAT2 and CAT3. This interaction is not induced by alkaline stress or H(2)O(2) and NaCl treatments. In terms of tissue distribution, expressed in roots, stems, leaves, flowers and siliques.

The protein resides in the cytoplasm. The protein localises to the nucleus. Functionally, has holdase chaperone activity that may fold catalase to a functional structure. Not required for the peroxisome import of catalases. Required for the activity of catalases and acts mainly at the post-transcriptional level. This Arabidopsis thaliana (Mouse-ear cress) protein is Protein NCA1.